The primary structure comprises 266 residues: Glucosamine-6-phosphate deaminase (266 aa).

Aspartate 72 functions as the Proton acceptor; for enolization step in the catalytic mechanism. Residue aspartate 141 is the For ring-opening step of the active site. Histidine 143 acts as the Proton acceptor; for ring-opening step in catalysis. The For ring-opening step role is filled by glutamate 148.

Belongs to the glucosamine/galactosamine-6-phosphate isomerase family. NagB subfamily. As to quaternary structure, homohexamer; trimer of disulfide-linked dimers.

The catalysed reaction is alpha-D-glucosamine 6-phosphate + H2O = beta-D-fructose 6-phosphate + NH4(+). Its pathway is amino-sugar metabolism; N-acetylneuraminate degradation; D-fructose 6-phosphate from N-acetylneuraminate: step 5/5. With respect to regulation, allosterically activated by N-acetylglucosamine 6-phosphate (GlcNAc6P). Functionally, catalyzes the reversible isomerization-deamination of glucosamine 6-phosphate (GlcN6P) to form fructose 6-phosphate (Fru6P) and ammonium ion. This is Glucosamine-6-phosphate deaminase from Shigella flexneri serotype 5b (strain 8401).